A 383-amino-acid polypeptide reads, in one-letter code: Dephospho-CoA kinase (383 aa).

The 199-residue stretch at 3-201 (RIGLTGGMGA…RRLVPFERNL (199 aa)) folds into the DPCK domain. An ATP-binding site is contributed by 11–16 (GAGKST). The interval 196–383 (PFERNLRAAT…EVAERLLGTV (188 aa)) is UPF0157.

This sequence in the N-terminal section; belongs to the CoaE family. In the C-terminal section; belongs to the UPF0157 (GrpB) family.

The protein localises to the cytoplasm. It catalyses the reaction 3'-dephospho-CoA + ATP = ADP + CoA + H(+). Its pathway is cofactor biosynthesis; coenzyme A biosynthesis; CoA from (R)-pantothenate: step 5/5. In terms of biological role, catalyzes the phosphorylation of the 3'-hydroxyl group of dephosphocoenzyme A to form coenzyme A. This Nocardia farcinica (strain IFM 10152) protein is Dephospho-CoA kinase.